Consider the following 58-residue polypeptide: Large ribosomal subunit protein bL32 (58 aa).

It belongs to the bacterial ribosomal protein bL32 family.

The sequence is that of Large ribosomal subunit protein bL32 from Limosilactobacillus fermentum (strain NBRC 3956 / LMG 18251) (Lactobacillus fermentum).